A 99-amino-acid polypeptide reads, in one-letter code: Small integral membrane protein 14 (99 aa).

Topologically, residues Met-1–Ser-49 are lumenal. The chain crosses the membrane as a helical span at residues Gly-50 to Leu-70. Topologically, residues Arg-71–Asp-99 are cytoplasmic. A disordered region spans residues Gly-77 to Asp-99.

Ubiquitously expressed.

The protein resides in the endoplasmic reticulum membrane. This Mus musculus (Mouse) protein is Small integral membrane protein 14 (Smim14).